Consider the following 168-residue polypeptide: Protein-export protein SecB (168 aa).

Residues 1-20 (MTDETAANGENEAGRQSQSS) form a disordered region.

Belongs to the SecB family. Homotetramer, a dimer of dimers. One homotetramer interacts with 1 SecA dimer.

The protein resides in the cytoplasm. In terms of biological role, one of the proteins required for the normal export of preproteins out of the cell cytoplasm. It is a molecular chaperone that binds to a subset of precursor proteins, maintaining them in a translocation-competent state. It also specifically binds to its receptor SecA. This chain is Protein-export protein SecB, found in Rhodospirillum centenum (strain ATCC 51521 / SW).